The primary structure comprises 347 residues: Fructose-1,6-bisphosphatase class 1 (347 aa).

Positions 106, 128, 130, and 131 each coordinate Mg(2+). Substrate-binding positions include 131-134 (DGSS), Asn223, Tyr251, and Lys281. Residue Glu287 participates in Mg(2+) binding.

Belongs to the FBPase class 1 family. In terms of assembly, homotetramer. It depends on Mg(2+) as a cofactor.

It localises to the cytoplasm. The enzyme catalyses beta-D-fructose 1,6-bisphosphate + H2O = beta-D-fructose 6-phosphate + phosphate. The protein operates within carbohydrate biosynthesis; Calvin cycle. The sequence is that of Fructose-1,6-bisphosphatase class 1 from Synechocystis sp. (strain ATCC 27184 / PCC 6803 / Kazusa).